We begin with the raw amino-acid sequence, 487 residues long: Glutamyl-tRNA(Gln) amidotransferase subunit A (487 aa).

Residues K79 and S158 each act as charge relay system in the active site. Residue S182 is the Acyl-ester intermediate of the active site.

Belongs to the amidase family. GatA subfamily. As to quaternary structure, heterotrimer of A, B and C subunits.

The catalysed reaction is L-glutamyl-tRNA(Gln) + L-glutamine + ATP + H2O = L-glutaminyl-tRNA(Gln) + L-glutamate + ADP + phosphate + H(+). In terms of biological role, allows the formation of correctly charged Gln-tRNA(Gln) through the transamidation of misacylated Glu-tRNA(Gln) in organisms which lack glutaminyl-tRNA synthetase. The reaction takes place in the presence of glutamine and ATP through an activated gamma-phospho-Glu-tRNA(Gln). This is Glutamyl-tRNA(Gln) amidotransferase subunit A from Ehrlichia chaffeensis (strain ATCC CRL-10679 / Arkansas).